The chain runs to 433 residues: Shufflon protein C' (433 aa).

The segment at 1–361 (MKKYDRGWAS…TGAILSCQSG (361 aa)) is constant region. The interval 362 to 433 (RWSGGNKINY…HVDAYCCPFN (72 aa)) is variable region.

The chain is Shufflon protein C' from Escherichia coli.